Reading from the N-terminus, the 668-residue chain is Echinocandin B biosynthetic cluster protein J (668 aa).

Disordered regions lie at residues 1-20 (MHFA…DQSL), 92-113 (YTPP…PPTP), 224-322 (PLDH…QSAD), 330-349 (EVAE…SIPT), and 483-506 (NCSS…PPLK). Residues 96 to 106 (SLDSRSSATPP) show a composition bias toward polar residues. The span at 264-275 (NPEPGTPTPPSP) shows a compositional bias: pro residues. Positions 311-322 (YRSTPSPCQSAD) are enriched in polar residues. The span at 484–494 (CSSSSCSSSAS) shows a compositional bias: low complexity. The segment covering 495 to 505 (KKNEEKREPPL) has biased composition (basic and acidic residues).

It functions in the pathway antifungal biosynthesis. Its function is as follows. Part of the gene cluster that mediates the biosynthesis of echinocandin B, a fungal lipidated cyclic hexapeptide that acts as an antifungal agent. Linoleoyl-AMP, produced by the fatty-acyl-AMP ligase ecdI, is transferred to the initiation carrier domain (T0) of ecdA. The linoleoyl-S-phosphopantetheinyl-T0 is sequentially extended with L-ornithine, L-threonine, L-proline, L-homotyrosine, L-threonine, and 4R-methyl-L-proline to form the linear hexapeptide. Thereafter, the terminal condensation (C7) performs macrocyclization of the NRPS product and the cyclic scaffold is released from ecdA. All six of the amino acid residues are hydroxylated, including 4R,5R-dihydroxy-L-ornithine, 4R-hydroxyl-L-proline, 3S,4S-dihydroxy-L-homotyrosine, and 3S-hydroxyl-4S-methyl-L-prolin. In the pathway, all the hydroxylation reactions are proposed to occur following completion of the cyclic peptide, so the unhydroxylated precursor produced by ecdA will undergo six rounds of hydroxylation. Five hydroxylase genes (ecdG, ecdH, ecdK, htyE and htyF) are embedded within the echinocandin B (ecd) and L-homotyrosine (hty) clusters. This chain is Echinocandin B biosynthetic cluster protein J, found in Aspergillus rugulosus (Emericella rugulosa).